Here is a 133-residue protein sequence, read N- to C-terminus: Late embryogenesis abundant protein B19.3 (133 aa).

The segment at 1–133 is disordered; it reads MASGQQERSE…IDESKFKTKS (133 aa). 3 stretches are compositionally biased toward basic and acidic residues: residues 7–19, 32–102, and 113–133; these read ERSELDRMAREGE, EAQE…EMGR, and GGERAAREGIDIDESKFKTKS. A run of 3 repeats spans residues 24-43, 44-63, and 64-83. The segment at 24-83 is 3 X 20 AA tandem repeats; the sequence is GGTGGKTLEAQEHLAEGRSRGGQTRKDQLGEEGYREMGHKGGETRKEQLGEEGYREMGHK.

Belongs to the small hydrophilic plant seed protein family.

In terms of biological role, lea proteins are late embryonic proteins abundant in higher plant seed embryos. The sequence is that of Late embryogenesis abundant protein B19.3 (B19.3) from Hordeum vulgare (Barley).